We begin with the raw amino-acid sequence, 501 residues long: Glutamate--tRNA ligase (501 aa).

Positions proline 10–glycine 20 match the 'HIGH' region motif. A 'KMSKS' region motif is present at residues lysine 251–arginine 255. Lysine 254 provides a ligand contact to ATP.

It belongs to the class-I aminoacyl-tRNA synthetase family. Glutamate--tRNA ligase type 1 subfamily. In terms of assembly, monomer.

Its subcellular location is the cytoplasm. The catalysed reaction is tRNA(Glu) + L-glutamate + ATP = L-glutamyl-tRNA(Glu) + AMP + diphosphate. In terms of biological role, catalyzes the attachment of glutamate to tRNA(Glu) in a two-step reaction: glutamate is first activated by ATP to form Glu-AMP and then transferred to the acceptor end of tRNA(Glu). This is Glutamate--tRNA ligase from Desulforudis audaxviator (strain MP104C).